We begin with the raw amino-acid sequence, 253 residues long: Ubiquinone/menaquinone biosynthesis C-methyltransferase UbiE (253 aa).

Residues Thr-76, Asp-97, Asn-125–Ala-126, and Ser-142 each bind S-adenosyl-L-methionine.

This sequence belongs to the class I-like SAM-binding methyltransferase superfamily. MenG/UbiE family.

The enzyme catalyses a 2-demethylmenaquinol + S-adenosyl-L-methionine = a menaquinol + S-adenosyl-L-homocysteine + H(+). It carries out the reaction a 2-methoxy-6-(all-trans-polyprenyl)benzene-1,4-diol + S-adenosyl-L-methionine = a 5-methoxy-2-methyl-3-(all-trans-polyprenyl)benzene-1,4-diol + S-adenosyl-L-homocysteine + H(+). It functions in the pathway quinol/quinone metabolism; menaquinone biosynthesis; menaquinol from 1,4-dihydroxy-2-naphthoate: step 2/2. Its pathway is cofactor biosynthesis; ubiquinone biosynthesis. Methyltransferase required for the conversion of demethylmenaquinol (DMKH2) to menaquinol (MKH2) and the conversion of 2-polyprenyl-6-methoxy-1,4-benzoquinol (DDMQH2) to 2-polyprenyl-3-methyl-6-methoxy-1,4-benzoquinol (DMQH2). The sequence is that of Ubiquinone/menaquinone biosynthesis C-methyltransferase UbiE from Xylella fastidiosa (strain M23).